Reading from the N-terminus, the 370-residue chain is UDP-N-acetylglucosamine--N-acetylmuramyl-(pentapeptide) pyrophosphoryl-undecaprenol N-acetylglucosamine transferase (370 aa).

UDP-N-acetyl-alpha-D-glucosamine is bound by residues 15 to 17, Asn-129, Arg-170, Ser-199, Ile-254, and Gln-299; that span reads TGG.

This sequence belongs to the glycosyltransferase 28 family. MurG subfamily.

It localises to the cell inner membrane. It carries out the reaction di-trans,octa-cis-undecaprenyl diphospho-N-acetyl-alpha-D-muramoyl-L-alanyl-D-glutamyl-meso-2,6-diaminopimeloyl-D-alanyl-D-alanine + UDP-N-acetyl-alpha-D-glucosamine = di-trans,octa-cis-undecaprenyl diphospho-[N-acetyl-alpha-D-glucosaminyl-(1-&gt;4)]-N-acetyl-alpha-D-muramoyl-L-alanyl-D-glutamyl-meso-2,6-diaminopimeloyl-D-alanyl-D-alanine + UDP + H(+). It participates in cell wall biogenesis; peptidoglycan biosynthesis. Functionally, cell wall formation. Catalyzes the transfer of a GlcNAc subunit on undecaprenyl-pyrophosphoryl-MurNAc-pentapeptide (lipid intermediate I) to form undecaprenyl-pyrophosphoryl-MurNAc-(pentapeptide)GlcNAc (lipid intermediate II). This chain is UDP-N-acetylglucosamine--N-acetylmuramyl-(pentapeptide) pyrophosphoryl-undecaprenol N-acetylglucosamine transferase, found in Magnetococcus marinus (strain ATCC BAA-1437 / JCM 17883 / MC-1).